Reading from the N-terminus, the 274-residue chain is Carboxy-S-adenosyl-L-methionine synthase (274 aa).

Residues tyrosine 59, 93 to 95 (GCS), 149 to 150 (DI), asparagine 164, and arginine 231 contribute to the S-adenosyl-L-methionine site.

It belongs to the class I-like SAM-binding methyltransferase superfamily. Cx-SAM synthase family. As to quaternary structure, homodimer.

The enzyme catalyses prephenate + S-adenosyl-L-methionine = carboxy-S-adenosyl-L-methionine + 3-phenylpyruvate + H2O. Its function is as follows. Catalyzes the conversion of S-adenosyl-L-methionine (SAM) to carboxy-S-adenosyl-L-methionine (Cx-SAM). This chain is Carboxy-S-adenosyl-L-methionine synthase, found in Psychrobacter sp. (strain PRwf-1).